The chain runs to 650 residues: Chaperone protein HtpG (650 aa).

Positions 1-344 (MSKHTHSFQA…SADLPLNVSR (344 aa)) are a; substrate-binding. Residues 345-582 (ELLQESRDVR…DGGMSTQLAR (238 aa)) form a b region. The segment at 583–650 (LLKQAGQSAP…YVKRVNALLA (68 aa)) is c.

It belongs to the heat shock protein 90 family. In terms of assembly, homodimer.

It is found in the cytoplasm. Molecular chaperone. Has ATPase activity. In Acidovorax sp. (strain JS42), this protein is Chaperone protein HtpG.